The sequence spans 365 residues: MTENITTETRPSIYGLTRDQLIEWAIENGEKKFRATQVWDWLYRKRVQSFEEMSNLSAVFIDKLNEAFILNPLEQVVVQESADGTVKYLFMLPDKVMIETVLMRQSYGLSVCVTTQVGCNMGCTFCASGILKKERDVTAGEIVSQIMLVQKYFDERGLDERVSHVVVMGIGEPFDNYEHLMNFLRVINDDNGLAIGARHITVSTCGFMPAKIKEFAHENLQINLAISLHAPNNELRTSLMRITRNAPLEKLFEAIDYYTETTNRRVTYEYIMLSGENDSPEIAQQLADLIKPRNKLSYVNLIPYNPVAEHIKYERSTKDNTAKFYDVLKKNGINCVVRQEHGTDIDAACGQLRSKQIKKNKAKLA.

Glu99 serves as the catalytic Proton acceptor. In terms of domain architecture, Radical SAM core spans 105–344 (QSYGLSVCVT…CVVRQEHGTD (240 aa)). A disulfide bridge links Cys112 with Cys349. [4Fe-4S] cluster contacts are provided by Cys119, Cys123, and Cys126. S-adenosyl-L-methionine-binding positions include 171-172 (GE), Ser203, 227-229 (SLH), and Asn305. The active-site S-methylcysteine intermediate is Cys349.

The protein belongs to the radical SAM superfamily. RlmN family. Requires [4Fe-4S] cluster as cofactor.

The protein localises to the cytoplasm. It catalyses the reaction adenosine(2503) in 23S rRNA + 2 reduced [2Fe-2S]-[ferredoxin] + 2 S-adenosyl-L-methionine = 2-methyladenosine(2503) in 23S rRNA + 5'-deoxyadenosine + L-methionine + 2 oxidized [2Fe-2S]-[ferredoxin] + S-adenosyl-L-homocysteine. It carries out the reaction adenosine(37) in tRNA + 2 reduced [2Fe-2S]-[ferredoxin] + 2 S-adenosyl-L-methionine = 2-methyladenosine(37) in tRNA + 5'-deoxyadenosine + L-methionine + 2 oxidized [2Fe-2S]-[ferredoxin] + S-adenosyl-L-homocysteine. Functionally, specifically methylates position 2 of adenine 2503 in 23S rRNA and position 2 of adenine 37 in tRNAs. The protein is Probable dual-specificity RNA methyltransferase RlmN of Lactococcus lactis subsp. cremoris (strain SK11).